The chain runs to 790 residues: MEMGVMENLMVHTEISKVKSQSNGEVEKRGVSVLENGGVCKLDRMSGLKFKRRKVFAVRDFPPGCGSRAMEVKIACENGNVVEDVKVVESLVKEEESLGQRDASENVSDIRMAEPVEVQPLRICLPGGDVVRDLSVTAGDECSNSEQIVAGSGVSSSSGTENIVRDIVVYADESSLGMDNLDQTQPLEIEMSDVAVAKPRLVAGRKKAKKGIACHSSLKVVSREFGEGSRKKKSKKNLYWRDRESLDSPEQLRILGVGTSSGSSSGDSSRNKVKETLRLFHGVCRKILQEDEAKPEDQRRKGKGLRIDFEASTILKRNGKFLNSGVHILGEVPGVEVGDEFQYRMELNILGIHKPSQAGIDYMKYGKAKVATSIVASGGYDDHLDNSDVLTYTGQGGNVMQVKKKGEELKEPEDQKLITGNLALATSIEKQTPVRVIRGKHKSTHDKSKGGNYVYDGLYLVEKYWQQVGSHGMNVFKFQLRRIPGQPELSWVEVKKSKSKYREGLCKLDISEGKEQSPISAVNEIDDEKPPLFTYTVKLIYPDWCRPVPPKSCCCTTRCTEAEARVCACVEKNGGEIPYNFDGAIVGAKPTIYECGPLCKCPSSCYLRVTQHGIKLPLEIFKTKSRGWGVRCLKSIPIGSFICEYVGELLEDSEAERRIGNDEYLFDIGNRYDNSLAQGMSELMLGTQAGRSMAEGDESSGFTIDAASKGNVGRFINHSCSPNLYAQNVLYDHEDSRIPHVMFFAQDNIPPLQELCYDYNYALDQVRDSKGNIKQKPCFCGAAVCRRRLY.

The segment at 251–271 is disordered; it reads QLRILGVGTSSGSSSGDSSRN. Residues 256–268 are compositionally biased toward low complexity; sequence GVGTSSGSSSGDS. A YDG domain is found at 330-482; it reads GEVPGVEVGD…MNVFKFQLRR (153 aa). One can recognise a Pre-SET domain in the interval 551-613; it reads KSCCCTTRCT…SCYLRVTQHG (63 aa). Zn(2+) contacts are provided by Cys-553, Cys-554, Cys-555, Cys-559, Cys-567, Cys-569, Cys-595, Cys-599, Cys-601, and Cys-605. The SET domain occupies 616–760; sequence LPLEIFKTKS…PLQELCYDYN (145 aa). Residues 626 to 628, Asp-662, Tyr-664, Arg-714, and 717 to 718 each bind S-adenosyl-L-methionine; these read RGW and NH. Positions 720, 778, 780, and 785 each coordinate Zn(2+). The Post-SET domain occupies 774 to 790; sequence KQKPCFCGAAVCRRRLY.

The protein belongs to the class V-like SAM-binding methyltransferase superfamily. Histone-lysine methyltransferase family. Suvar3-9 subfamily.

It is found in the nucleus. Its subcellular location is the chromosome. It localises to the centromere. The enzyme catalyses N(6)-methyl-L-lysyl(9)-[histone H3] + S-adenosyl-L-methionine = N(6),N(6)-dimethyl-L-lysyl(9)-[histone H3] + S-adenosyl-L-homocysteine + H(+). It catalyses the reaction L-lysyl(9)-[histone H3] + S-adenosyl-L-methionine = N(6)-methyl-L-lysyl(9)-[histone H3] + S-adenosyl-L-homocysteine + H(+). In terms of biological role, histone methyltransferase. Methylates 'Lys-9' of histone H3. H3 'Lys-9' methylation represents a specific tag for epigenetic transcriptional repression. Seems to act preferentially on dsMRNA. This chain is Histone-lysine N-methyltransferase, H3 lysine-9 specific SUVH6 (SUVH6), found in Arabidopsis thaliana (Mouse-ear cress).